Consider the following 259-residue polypeptide: Ribonuclease PH (259 aa).

Phosphate is bound by residues Arg88 and 126–128; that span reads GTR.

This sequence belongs to the RNase PH family. In terms of assembly, homohexameric ring arranged as a trimer of dimers.

The enzyme catalyses tRNA(n+1) + phosphate = tRNA(n) + a ribonucleoside 5'-diphosphate. Phosphorolytic 3'-5' exoribonuclease that plays an important role in tRNA 3'-end maturation. Removes nucleotide residues following the 3'-CCA terminus of tRNAs; can also add nucleotides to the ends of RNA molecules by using nucleoside diphosphates as substrates, but this may not be physiologically important. Probably plays a role in initiation of 16S rRNA degradation (leading to ribosome degradation) during starvation. The polypeptide is Ribonuclease PH (Mycobacterium ulcerans (strain Agy99)).